We begin with the raw amino-acid sequence, 537 residues long: Putative cysteine ligase BshC (537 aa).

Residues Glu415–Leu439 adopt a coiled-coil conformation.

It belongs to the BshC family.

Involved in bacillithiol (BSH) biosynthesis. May catalyze the last step of the pathway, the addition of cysteine to glucosamine malate (GlcN-Mal) to generate BSH. The protein is Putative cysteine ligase BshC of Staphylococcus epidermidis (strain ATCC 12228 / FDA PCI 1200).